The chain runs to 61 residues: Conotoxin TeAr154 (61 aa).

Positions 1–19 (MHCLPVFVILLLLTASGLS) are cleaved as a signal peptide. Positions 20–47 (VDARPKTEDDVPLSSFRDNTKSTLQRLL) are excised as a propeptide. Glutamate 57 is subject to 4-carboxyglutamate.

Contains 2 disulfide bonds that can be either 'C1-C3, C2-C4' or 'C1-C4, C2-C3', since these disulfide connectivities have been observed for conotoxins with cysteine framework V (for examples, see AC P0DQQ7 and AC P81755). In terms of processing, contains 2 disulfide bonds. Expressed by the venom duct.

Its subcellular location is the secreted. The chain is Conotoxin TeAr154 from Conus textile (Cloth-of-gold cone).